Reading from the N-terminus, the 294-residue chain is Phosphatidylglycerol--prolipoprotein diacylglyceryl transferase (294 aa).

7 consecutive transmembrane segments (helical) span residues 21 to 41 (VSLH…LWLA), 60 to 80 (LLYV…VLFY), 96 to 116 (WDGG…MIWF), 124 to 144 (FFQV…LGRI), 199 to 219 (SQLY…NIFV), 226 to 246 (GSVS…VEFF), and 259 to 279 (ISMG…FMVW). Position 143 (arginine 143) interacts with a 1,2-diacyl-sn-glycero-3-phospho-(1'-sn-glycerol).

The protein belongs to the Lgt family.

Its subcellular location is the cell inner membrane. It carries out the reaction L-cysteinyl-[prolipoprotein] + a 1,2-diacyl-sn-glycero-3-phospho-(1'-sn-glycerol) = an S-1,2-diacyl-sn-glyceryl-L-cysteinyl-[prolipoprotein] + sn-glycerol 1-phosphate + H(+). It participates in protein modification; lipoprotein biosynthesis (diacylglyceryl transfer). In terms of biological role, catalyzes the transfer of the diacylglyceryl group from phosphatidylglycerol to the sulfhydryl group of the N-terminal cysteine of a prolipoprotein, the first step in the formation of mature lipoproteins. The protein is Phosphatidylglycerol--prolipoprotein diacylglyceryl transferase of Proteus mirabilis (strain HI4320).